The sequence spans 559 residues: MMASRLSSFSSSIARWHGDEHAVASPLDDAEILSMRRTRLFGATGTVLMAIGALGAGARPVVQDPTFGVRLLNLPSRIQTVSLTMTTTGAVMMALAWLMLGRYTLGKRRMSRSQLDHTLMLWTVPLLIAPPMYSRDVYSYLAQSEIAVLGLDPYRVGPATGLGLDHVFTLSVPNLWRETPAPYGPLFLWIGQGISALTGENIVEAVMCHRLVVLIGVGLIVWATPRLARRCGVAEVSALWLGPCNPLLFMHLVAGIHNEALMLGLMLAGTEFALRGIDAAQPLLPRPLAWPSSRAQWQRWQPMAMLVLGAVLIAMSSQVKLPSLLALGFVAMALAWRWGGTVKAFVISCTSLGAISLAVMAVIGWASGLGFGWLFTLGTANVVRSWMSPPTLIALGTGQVGILLGLGDHTTAVLGLTRAIGVFMISILVSWLLFAVLRGRLHPVGGLGVALGGTVLLFPVVQPWYLLWAIIPLAAWATRPGFRGATIAITLIVGIFGPTANGDRFTLFQIVMATLASAVTVLLLIALTYRRLPWRPAPEPPARPPEQPAPADDAYAESP.

12 consecutive transmembrane segments (helical) span residues 41-61, 81-101, 202-222, 247-267, 300-316, 321-340, 355-375, 386-406, 419-439, 455-475, 480-500, and 507-527; these read FGATGTVLMAIGALGAGARPV, VSLTMTTTGAVMMALAWLMLG, IVEAVMCHRLVVLIGVGLIVW, LLFMHLVAGIHNEALMLGLML, WQPMAMLVLGAVLIAMS, LPSLLALGFVAMALAWRWGG, ISLAVMAVIGWASGLGFGWLF, WMSPPTLIALGTGQVGILLGL, AIGVFMISILVSWLLFAVLRG, VLLFPVVQPWYLLWAIIPLAA, PGFRGATIAITLIVGIFGPTA, and LFQIVMATLASAVTVLLLIAL. Pro residues predominate over residues 535-548; the sequence is RPAPEPPARPPEQP. A disordered region spans residues 535 to 559; it reads RPAPEPPARPPEQPAPADDAYAESP.

The protein belongs to the MptA/B family.

The protein resides in the membrane. In terms of biological role, catalyzes the addition of alpha-(1-&gt;6)-mannose residue. This is Probable alpha-(1-&gt;6)-mannopyranosyltransferase MSMEG_3120/MSMEI_3041 from Mycolicibacterium smegmatis (strain ATCC 700084 / mc(2)155) (Mycobacterium smegmatis).